The sequence spans 740 residues: MLKYAWQSGPKQSNRWLWHLSNQIWKRSYSSKIRNIGILAHIDAGKTTTTERMLFYAGKTRALGEVHRGNTVTDYLTQERERGITICSSAVTFSWNDHRINLLDTPGHIDFTMEVEQSLYAVDGVVVVLDGTAGVEAQTVTVWSQADKHKLPRLIFVNKMDRPDADFEKCVSDLKDKLETQPVCLQYPVKNEDGVLAINDVITLERLSWQQKDLGRSYRNVKLEPSDDLRLLQEKRNELIDQLSGLDDELADVVISTESFDNVDNALIERALRRATTQQKVVPVLLGSAYKNVGIQRLMDAVNAYLPAPEERNQIYDCFGTEVAGKVFKIVHDKQRGPLTLVRILRGEIKRGMRLISARGQAEVVSKLYEPLADEYREVSAVQSGDVVICAGLKSTVTGDLLTSSQSALKNAQKRYKQSLGNTAAKVEEDDELDESDELFAIDPQIPDAVYFCSIEPPSVSSQTAMEQALKQLQREDPSLRVSYDSVTGQTVLGGMGELHMDIIKSRILSEYKIDVDLGPLQIAYKETIEAPALTTLSVEKEIAGSKQSVSITLEVVKNQAELFSLDKSPDNLPNLNTLRPRILQVLRKGSISALERGPRVGGQVVETQIRLHNATIGRGTADSFVMATAAQCVQKLLSTSGTRLLEPIMALQIVAPSERISGIMADLSRRRALINDVLPKGERNKMILVNAPLAELSGYSSALRTISSGTASMTMQPCGFSSMNSVDESLAERRAQGLE.

The transit peptide at 1 to 29 (MLKYAWQSGPKQSNRWLWHLSNQIWKRSY) directs the protein to the mitochondrion. Residues 31 to 310 (SKIRNIGILA…AVNAYLPAPE (280 aa)) form the tr-type G domain. GTP is bound by residues 40 to 47 (AHIDAGKT), 104 to 108 (DTPGH), and 158 to 161 (NKMD).

It belongs to the TRAFAC class translation factor GTPase superfamily. Classic translation factor GTPase family. EF-G/EF-2 subfamily.

It is found in the mitochondrion. Its function is as follows. Mitochondrial GTPase that mediates the disassembly of ribosomes from messenger RNA at the termination of mitochondrial protein biosynthesis. Not involved in the GTP-dependent ribosomal translocation step during translation elongation. The protein is Ribosome-releasing factor 2, mitochondrial of Drosophila melanogaster (Fruit fly).